The following is a 231-amino-acid chain: Orotate phosphoribosyltransferase (231 aa).

5-phospho-alpha-D-ribose 1-diphosphate is bound by residues Lys27, 79–80 (YK), Arg106, Lys107, Lys110, His112, and 133–141 (DDVMTAGTA). Positions 137 and 166 each coordinate orotate.

It belongs to the purine/pyrimidine phosphoribosyltransferase family. PyrE subfamily. Homodimer. Mg(2+) is required as a cofactor.

It carries out the reaction orotidine 5'-phosphate + diphosphate = orotate + 5-phospho-alpha-D-ribose 1-diphosphate. It participates in pyrimidine metabolism; UMP biosynthesis via de novo pathway; UMP from orotate: step 1/2. Its function is as follows. Catalyzes the transfer of a ribosyl phosphate group from 5-phosphoribose 1-diphosphate to orotate, leading to the formation of orotidine monophosphate (OMP). The sequence is that of Orotate phosphoribosyltransferase from Bifidobacterium longum (strain DJO10A).